The sequence spans 477 residues: Aspartyl/glutamyl-tRNA(Asn/Gln) amidotransferase subunit B (477 aa).

The protein belongs to the GatB/GatE family. GatB subfamily. Heterotrimer of A, B and C subunits.

It carries out the reaction L-glutamyl-tRNA(Gln) + L-glutamine + ATP + H2O = L-glutaminyl-tRNA(Gln) + L-glutamate + ADP + phosphate + H(+). The catalysed reaction is L-aspartyl-tRNA(Asn) + L-glutamine + ATP + H2O = L-asparaginyl-tRNA(Asn) + L-glutamate + ADP + phosphate + 2 H(+). Allows the formation of correctly charged Asn-tRNA(Asn) or Gln-tRNA(Gln) through the transamidation of misacylated Asp-tRNA(Asn) or Glu-tRNA(Gln) in organisms which lack either or both of asparaginyl-tRNA or glutaminyl-tRNA synthetases. The reaction takes place in the presence of glutamine and ATP through an activated phospho-Asp-tRNA(Asn) or phospho-Glu-tRNA(Gln). The protein is Aspartyl/glutamyl-tRNA(Asn/Gln) amidotransferase subunit B of Streptococcus sanguinis (strain SK36).